The primary structure comprises 266 residues: GATA zinc finger domain-containing protein 1 (266 aa).

The GATA-type zinc-finger motif lies at 9-33 (CSMCKTTSSSMWKKSPQGEILCHHC). The span at 59–72 (TTTFATTSAGPSQS) shows a compositional bias: low complexity. The segment at 59-112 (TTTFATTSAGPSQSNGGGGGKQSKQEIHRRSARLRNTKYKSAPAAEKKVSTKGK) is disordered. Lysine 259 is covalently cross-linked (Glycyl lysine isopeptide (Lys-Gly) (interchain with G-Cter in SUMO2)).

In terms of assembly, component of a chromatin complex, at least composed of KDM5A, GATAD1 and EMSY. In terms of tissue distribution, expressed in the eye (lens, ciliary body, retina, sclera and conjunctiva) at postnatal day 2 and 10. Not detected anywhere at postnatal day 14.

It localises to the nucleus. Its function is as follows. Component of some chromatin complex recruited to chromatin sites methylated 'Lys-4' of histone H3 (H3K4me), with a preference for trimethylated form (H3K4me3). This is GATA zinc finger domain-containing protein 1 (Gatad1) from Mus musculus (Mouse).